The chain runs to 118 residues: Basic phospholipase A2 nigroxin A (118 aa).

7 cysteine pairs are disulfide-bonded: Cys11–Cys70, Cys25–Cys117, Cys27–Cys43, Cys42–Cys98, Cys49–Cys91, Cys59–Cys84, and Cys77–Cys89. Residues Tyr26, Gly28, and Gly30 each contribute to the Ca(2+) site. His46 is an active-site residue. Asp47 lines the Ca(2+) pocket. Residue Asp92 is part of the active site.

The protein belongs to the phospholipase A2 family. Group I subfamily. D49 sub-subfamily. Ca(2+) serves as cofactor. In terms of tissue distribution, expressed by the venom gland.

It localises to the secreted. The enzyme catalyses a 1,2-diacyl-sn-glycero-3-phosphocholine + H2O = a 1-acyl-sn-glycero-3-phosphocholine + a fatty acid + H(+). Snake venom phospholipase A2 (PLA2) that has only a weak enzymatic activity. It has a myotoxic activity in vivo (dystrophic effect). PLA2 catalyzes the calcium-dependent hydrolysis of the 2-acyl groups in 3-sn-phosphoglycerides. This is Basic phospholipase A2 nigroxin A from Micrurus nigrocinctus (Central American coral snake).